Consider the following 245-residue polypeptide: Carbohydrate deacetylase (245 aa).

Mg(2+) is bound by residues H59 and H121.

It belongs to the YdjC deacetylase family. In terms of assembly, homodimer. Mg(2+) is required as a cofactor.

Its function is as follows. Probably catalyzes the deacetylation of acetylated carbohydrates an important step in the degradation of oligosaccharides. This is Carbohydrate deacetylase from Clostridium beijerinckii (strain ATCC 51743 / NCIMB 8052) (Clostridium acetobutylicum).